The sequence spans 786 residues: Cas scaffolding protein family member 4 (786 aa).

Residues 11–73 form the SH3 domain; the sequence is PKALLARALY…PANRLQILTE (63 aa). A phosphoserine mark is found at S200 and S249. Residues 262–295 are disordered; it reads SFAEESRPHALPSSSSTFYNPPSGRSRSLTPQLN. Over residues 273-295 the composition is skewed to polar residues; sequence PSSSSTFYNPPSGRSRSLTPQLN. Position 305 is a phosphoserine (S305). Disordered regions lie at residues 361–429 and 612–670; these read QAGK…SEES and IQPP…ERKP. Positions 364–373 are enriched in basic and acidic residues; it reads KELEKAKEVS. Residues 374–391 are compositionally biased toward polar residues; the sequence is ENSAGHNSSWFSRRTTSP. Phosphoserine occurs at positions 376 and 390. The segment covering 399 to 427 has biased composition (low complexity); the sequence is SGSSSDSRASIVSSCSTTSTDDSSSSSSE. A compositionally biased stretch (basic and acidic residues) spans 630 to 642; that stretch reads KQREDEHSSELLK.

Belongs to the CAS family. As to quaternary structure, interacts (via SH3 domain) with PTK2/FAK1 (via C-terminus). Phosphorylated on tyrosines by SRC. In terms of tissue distribution, expressed abundantly in lung and spleen. Also highly expressed in ovarian and leukemia cell lines.

It localises to the cytoplasm. The protein resides in the cytoskeleton. It is found in the cell junction. The protein localises to the focal adhesion. Functionally, docking protein that plays a role in tyrosine kinase-based signaling related to cell adhesion and cell spreading. Regulates PTK2/FAK1 activity, focal adhesion integrity, and cell spreading. The protein is Cas scaffolding protein family member 4 (CASS4) of Homo sapiens (Human).